A 95-amino-acid chain; its full sequence is uncharacterized protein (95 aa).

A disordered region spans residues 46 to 68; the sequence is GDRGTNGRTEAEHDGIPHSRKKV.

This is an uncharacterized protein from Schizosaccharomyces pombe (strain 972 / ATCC 24843) (Fission yeast).